We begin with the raw amino-acid sequence, 149 residues long: Nucleoside diphosphate kinase (149 aa).

6 residues coordinate ATP: Lys9, Phe57, Arg85, Thr91, Arg102, and Asn112. Residue His115 is the Pros-phosphohistidine intermediate of the active site.

The protein belongs to the NDK family. In terms of assembly, homotetramer. Requires Mg(2+) as cofactor.

The protein resides in the cytoplasm. It carries out the reaction a 2'-deoxyribonucleoside 5'-diphosphate + ATP = a 2'-deoxyribonucleoside 5'-triphosphate + ADP. The catalysed reaction is a ribonucleoside 5'-diphosphate + ATP = a ribonucleoside 5'-triphosphate + ADP. Functionally, major role in the synthesis of nucleoside triphosphates other than ATP. The ATP gamma phosphate is transferred to the NDP beta phosphate via a ping-pong mechanism, using a phosphorylated active-site intermediate. This is Nucleoside diphosphate kinase from Microcystis aeruginosa (strain NIES-843 / IAM M-2473).